Consider the following 158-residue polypeptide: MAFCNKLGGLLRQNISSNGNVPVTSMLGSLRLMSTKLFIGGLSWGTDDASLRDAFAHFGDVVDAKVIVDRETGRSRGFGFVNFNDEGAATAAISEMDGKELNGRHIRVNPANDRPSAPRAYGGGGGYSGGGGGYGGGGGGYGGGGGGYGGGGDGGGGF.

The transit peptide at 1–34 directs the protein to the mitochondrion; it reads MAFCNKLGGLLRQNISSNGNVPVTSMLGSLRLMS. The RRM domain occupies 35–113; it reads TKLFIGGLSW…RHIRVNPAND (79 aa). Ser43 is subject to Phosphoserine. The segment at 122–157 is glycine-rich (GR) required for cell-to-cell movement; the sequence is GGGGGYSGGGGGYGGGGGGYGGGGGGYGGGGDGGGG.

The protein belongs to the GR-RBP family. In terms of assembly, binds to small phloem-mobile single-stranded RNAs (ss-sRNA, e.g. small interfering RNA (siRNA) and microRNA (miRNA)) in the phloeme exudate, including viral-derived sRNA (vsiRNA). Interacts with ORRM2, RBG3/ORRM3 and RBG5/ORRM4.

The protein localises to the mitochondrion. Its subcellular location is the secreted. Promotes the cis-splicing and editing of several mitochondrial RNAs (including NAD5 transcripts). Plays a role in RNA transcription or processing during stress. Binds RNAs and DNAs sequence with a preference to single-stranded nucleic acids. Displays strong affinity to poly(U) sequence. Exerts cold and freezing tolerance, probably by exhibiting an RNA chaperone activity during the cold and freezing adaptation process. Mediates cell-to-cell trafficking of RNA interference (RNAi) signals (small RNAs (sRNA), e.g. small interfering RNA (siRNA) and microRNA (miRNA)) which regulate growth and development, as well as responses to environmental inputs, including pathogen attack; can compromise zucchini yellow mosaic virus (ZYMV) and tobacco rattle virus (TRV) infections at the early stage. The sequence is that of Glycine-rich RNA-binding protein 2, mitochondrial from Arabidopsis thaliana (Mouse-ear cress).